The primary structure comprises 131 residues: Glycine cleavage system H protein (131 aa).

A Lipoyl-binding domain is found at 24–106 (VYCVGITEHA…YTDGWLFKIK (83 aa)). Lysine 65 carries the N6-lipoyllysine modification.

It belongs to the GcvH family. As to quaternary structure, the glycine cleavage system is composed of four proteins: P, T, L and H. Requires (R)-lipoate as cofactor.

Functionally, the glycine cleavage system catalyzes the degradation of glycine. The H protein shuttles the methylamine group of glycine from the P protein to the T protein. In Sodalis glossinidius (strain morsitans), this protein is Glycine cleavage system H protein.